The sequence spans 270 residues: MQKRSVFFISDGTGITAESVGHLLAHFPTVSFKHIRLPFTDSEQKVQEALLKIAETEKADGARPIVVMTLVNTDLRDMLKQSNAVHLDVFGSFVDPLAEELQEQPSRTSGIAHSVLGNSYYERIDAINFTLNHDDGMTDFGLSEAQVILVGVSRCGKTPTSLYLAMQFGIKAANYPLIPEDLERGSLPEALKKYPEKLYGLSINPERLHSVRSERRPDSHYASLDNCRREIRLAEDLMHREGISWIDSTSRSIEELSTIILQKIRVNSNH.

151–158 serves as a coordination point for ADP; it reads GVSRCGKT.

This sequence belongs to the pyruvate, phosphate/water dikinase regulatory protein family. PSRP subfamily.

It carries out the reaction [pyruvate, water dikinase] + ADP = [pyruvate, water dikinase]-phosphate + AMP + H(+). The enzyme catalyses [pyruvate, water dikinase]-phosphate + phosphate + H(+) = [pyruvate, water dikinase] + diphosphate. Its function is as follows. Bifunctional serine/threonine kinase and phosphorylase involved in the regulation of the phosphoenolpyruvate synthase (PEPS) by catalyzing its phosphorylation/dephosphorylation. The protein is Putative phosphoenolpyruvate synthase regulatory protein of Methylobacillus flagellatus (strain ATCC 51484 / DSM 6875 / VKM B-1610 / KT).